The primary structure comprises 66 residues: Gallinacin-5 (66 aa).

The N-terminal stretch at 1-19 (MQILTLLFAVLLLMLRAEP) is a signal peptide. Positions 20 to 25 (GLSLAR) are excised as a propeptide. Disulfide bonds link Cys31–Cys59, Cys38–Cys53, and Cys43–Cys60.

It belongs to the beta-defensin family. As to expression, strong expression in the tongue and bone marrow. Low expression in the esophagus, trachea, lung, brain and ovary. Expressed in the ovarian stroma, but not in the ovarian follicles.

The protein localises to the secreted. It localises to the cytoplasmic granule. Has bactericidal activity. The chain is Gallinacin-5 (GAL5) from Gallus gallus (Chicken).